We begin with the raw amino-acid sequence, 589 residues long: Transmembrane 9 superfamily member 5 (589 aa).

The signal sequence occupies residues 1-24 (MAQFLLTVLQVLLALTFWIGIGSG). At 25–227 (SSNHYNAGDH…SFHPISQKIH (203 aa)) the chain is on the lumenal side. The helical transmembrane segment at 228–248 (FFSFLNSITVVVLLIGLISFL) threads the bilayer. The Cytoplasmic portion of the chain corresponds to 249-291 (FMRHLKNELRSYSIGDEEERKEAGWKLVHSDVFRCPRNISWLC). A helical membrane pass occupies residues 292-312 (AILGTGTQLLILIIALFALAF). The Lumenal segment spans residues 313-321 (TGFLYPYNR). A helical transmembrane segment spans residues 322-342 (GMLLTSLVIMYTLTSIVAGYT). Over 343-361 (STSFHSQFEGNKQKRSVRL) the chain is Cytoplasmic. A helical transmembrane segment spans residues 362–382 (AGILYPVPFFIILSVLNTVAI). Over 383–394 (TYGATAALPFGT) the chain is Lumenal. The chain crosses the membrane as a helical span at residues 395–415 (IVIIILIFTLLNIPFLMLGGV). Over 416–450 (LGNRFGLLEFQPPSAVKRNPREIPPQNWYRRKLYQ) the chain is Cytoplasmic. Residues 451-471 (VFLGGFVPFSAVVLEWHQLYA) form a helical membrane-spanning segment. Residues 472-482 (SLWGFKIYTSP) lie on the Lumenal side of the membrane. Residues 483-503 (GIMLFTFIVLIFLSSSVGIIL) traverse the membrane as a helical segment. Residues 504-518 (TYIQLSGEDHEWWWR) lie on the Cytoplasmic side of the membrane. The chain crosses the membrane as a helical span at residues 519-539 (SILCGGFTAVFMYGYGVLFYL). Over 540 to 550 (RSDMTGFLQLS) the chain is Lumenal. Residues 551–571 (FYLGYTALLCYALFLVLGTIS) traverse the membrane as a helical segment. Residues 572–589 (FLASLMFIRHIYRSVKLE) are Cytoplasmic-facing. The Endoplasmic reticulum export signal motif lies at 578 to 583 (FIRHIY). Positions 587 to 589 (KLE) match the Golgi retention signal motif.

This sequence belongs to the nonaspanin (TM9SF) (TC 9.A.2) family. Expressed in the root cap and in giant cells.

It localises to the endosome membrane. Its subcellular location is the golgi apparatus membrane. This chain is Transmembrane 9 superfamily member 5, found in Arabidopsis thaliana (Mouse-ear cress).